A 138-amino-acid polypeptide reads, in one-letter code: Acidic phospholipase A2 2 (138 aa).

Positions 1–16 (MRTLWIVAVLLLGVEG) are cleaved as a signal peptide. 7 disulfides stabilise this stretch: C42–C131, C44–C60, C59–C111, C65–C138, C66–C104, C73–C97, and C91–C102. Residues Y43, G45, and G47 each coordinate Ca(2+). Residue H63 is part of the active site. Ca(2+) is bound at residue D64. D105 is a catalytic residue.

This sequence belongs to the phospholipase A2 family. Group II subfamily. D49 sub-subfamily. Requires Ca(2+) as cofactor. As to expression, expressed by the venom gland.

The protein localises to the secreted. The enzyme catalyses a 1,2-diacyl-sn-glycero-3-phosphocholine + H2O = a 1-acyl-sn-glycero-3-phosphocholine + a fatty acid + H(+). Functionally, snake venom phospholipase A2 (PLA2) that displays edema-inducing activities, exhibits indirect hemolytic activity, and inhibits ADP-induced platelet aggregation. PLA2 catalyzes the calcium-dependent hydrolysis of the 2-acyl groups in 3-sn-phosphoglycerides. The sequence is that of Acidic phospholipase A2 2 from Protobothrops mucrosquamatus (Taiwan habu).